The following is a 365-amino-acid chain: ATP-dependent (S)-NAD(P)H-hydrate dehydratase (365 aa).

The transit peptide at 1–43 (MLVKPSIISGLVRLTSHSPSSSSSVLRRQEFLVRTLCGSPIIR) directs the protein to the chloroplast. Leucine 2 carries the N-acetylserine modification. A YjeF C-terminal domain is found at 53-361 (AESVLRTVTP…ECLGESLEDI (309 aa)). Residues glycine 169 and 222 to 228 (NVNEYKR) each bind (6S)-NADPHX. ATP is bound by residues 262 to 266 (KGKSD) and 281 to 290 (GSPRRCGGQG). Position 291 (aspartate 291) interacts with (6S)-NADPHX.

It belongs to the NnrD/CARKD family. Mg(2+) is required as a cofactor.

The protein resides in the plastid. It is found in the chloroplast. Its subcellular location is the cytoplasm. It catalyses the reaction (6S)-NADHX + ATP = ADP + phosphate + NADH + H(+). The catalysed reaction is (6S)-NADPHX + ATP = ADP + phosphate + NADPH + H(+). Its function is as follows. Catalyzes the dehydration of the S-form of NAD(P)HX at the expense of ATP, which is converted to ADP. Together with NAD(P)HX epimerase, which catalyzes the epimerization of the S- and R-forms, the enzyme allows the repair of both epimers of NAD(P)HX, a damaged form of NAD(P)H that is a result of enzymatic or heat-dependent hydration. This chain is ATP-dependent (S)-NAD(P)H-hydrate dehydratase, found in Arabidopsis thaliana (Mouse-ear cress).